The sequence spans 427 residues: Serine hydroxymethyltransferase (427 aa).

(6S)-5,6,7,8-tetrahydrofolate-binding positions include Leu122 and 126-128 (GHL). Lys231 bears the N6-(pyridoxal phosphate)lysine mark. 355-357 (SPF) is a (6S)-5,6,7,8-tetrahydrofolate binding site.

Belongs to the SHMT family. Homodimer. Pyridoxal 5'-phosphate serves as cofactor.

The protein resides in the cytoplasm. It carries out the reaction (6R)-5,10-methylene-5,6,7,8-tetrahydrofolate + glycine + H2O = (6S)-5,6,7,8-tetrahydrofolate + L-serine. Its pathway is one-carbon metabolism; tetrahydrofolate interconversion. The protein operates within amino-acid biosynthesis; glycine biosynthesis; glycine from L-serine: step 1/1. Its function is as follows. Catalyzes the reversible interconversion of serine and glycine with tetrahydrofolate (THF) serving as the one-carbon carrier. This reaction serves as the major source of one-carbon groups required for the biosynthesis of purines, thymidylate, methionine, and other important biomolecules. Also exhibits THF-independent aldolase activity toward beta-hydroxyamino acids, producing glycine and aldehydes, via a retro-aldol mechanism. This is Serine hydroxymethyltransferase from Nostoc sp. (strain PCC 7120 / SAG 25.82 / UTEX 2576).